We begin with the raw amino-acid sequence, 1002 residues long: ATP-dependent DNA helicase MPH1 (1002 aa).

Residues 108–275 enclose the Helicase ATP-binding domain; sequence IVRCALFENV…EVVNNLHISK (168 aa). An ATP-binding site is contributed by 121–128; the sequence is IPTGTGKT. The DEAH box signature appears at 223-226; sequence DEAH. Residues 506–669 enclose the Helicase C-terminal domain; it reads DEETYIRKNK…ALEYTKSDRI (164 aa). Over residues 531-551 the composition is skewed to basic and acidic residues; sequence ENRVEEEKKRQKEQAKLERTG. Disordered stretches follow at residues 531–569 and 799–843; these read ENRV…NQKQ and AKSQ…DSHT. A compositionally biased stretch (polar residues) spans 553 to 568; sequence RTGSSEEAQLSGMNQK.

The protein belongs to the DEAD box helicase family. DEAH subfamily. FANCM sub-subfamily. As to quaternary structure, interacts with the MHF histone-fold complex to form the FANCM-MHF complex.

It localises to the nucleus. It catalyses the reaction ATP + H2O = ADP + phosphate + H(+). Functionally, ATP-dependent DNA helicase involved in DNA damage repair by homologous recombination and in genome maintenance. Capable of unwinding D-loops. Plays a role in limiting crossover recombinants during mitotic DNA double-strand break (DSB) repair. Component of a FANCM-MHF complex which promotes gene conversion at blocked replication forks, probably by reversal of the stalled fork. This chain is ATP-dependent DNA helicase MPH1, found in Kluyveromyces lactis (strain ATCC 8585 / CBS 2359 / DSM 70799 / NBRC 1267 / NRRL Y-1140 / WM37) (Yeast).